The chain runs to 401 residues: MAHMNPTPVLEAGQDKTMVLNMGPQHPSTHGVLRLLLEIDGETIVRIMPDIGYLHTGIEKTCEAKFYQQVVPMTDRIDYLCPMTNNLAYVLAVEKLLGLEIPERAQWIRVLCNELTRINSHLVWLGTGAMDLGAMTVFLYCFREREELLKLFEAVAGQRMMTSYFRVGGVSLEPPLGWFDRVKKFADTFPSKMDEYEGLLTQNPIFVMRTKGVAKITKEDALALGASGPTLRGSGIDFDLRRDMPYSGYDKFKFNVPVKTEGDVYARYQCRIAELRESCKIVQQALAGMPEGSIKADAPKVVLPDREKMKTQMESLIYHFKIVTEGFTVPPGEVYSAIESPRGEMGYYIVSDGTAKPYRVHMRSPSFANLQMLPSMCTGQLLADVVAAIGSIDIVLGDCDR.

It belongs to the complex I 49 kDa subunit family. As to quaternary structure, NDH-1 is composed of 14 different subunits. Subunits NuoB, C, D, E, F, and G constitute the peripheral sector of the complex.

It is found in the cell inner membrane. It catalyses the reaction a quinone + NADH + 5 H(+)(in) = a quinol + NAD(+) + 4 H(+)(out). Its function is as follows. NDH-1 shuttles electrons from NADH, via FMN and iron-sulfur (Fe-S) centers, to quinones in the respiratory chain. The immediate electron acceptor for the enzyme in this species is believed to be ubiquinone. Couples the redox reaction to proton translocation (for every two electrons transferred, four hydrogen ions are translocated across the cytoplasmic membrane), and thus conserves the redox energy in a proton gradient. The chain is NADH-quinone oxidoreductase subunit D 2 from Koribacter versatilis (strain Ellin345).